We begin with the raw amino-acid sequence, 136 residues long: Large ribosomal subunit protein bL17 (136 aa).

It belongs to the bacterial ribosomal protein bL17 family. Part of the 50S ribosomal subunit. Contacts protein L32.

The polypeptide is Large ribosomal subunit protein bL17 (Rickettsia conorii (strain ATCC VR-613 / Malish 7)).